The chain runs to 156 residues: MALEKSLVLLPLLVLILLVLGWVQPSLGKESRAKKFQRQHMDSDSSPSSNSTYCNQMMRRRNMTQGRCKPVNTFVHEPLVDVQNVCFQEKVTCKNGQGNCYKSNSSMHITDCRLTNGSRYPNCAYRTSPKERHIIVACEGNPYVPVHFDASVEDST.

The first 28 residues, 1–28, serve as a signal peptide directing secretion; that stretch reads MALEKSLVLLPLLVLILLVLGWVQPSLG. Over residues 33-43 the composition is skewed to basic and acidic residues; sequence AKKFQRQHMDS. Residues 33–52 are disordered; it reads AKKFQRQHMDSDSSPSSNST. Residues Lys-35 and Arg-38 each contribute to the substrate site. His-40 acts as the Proton acceptor in catalysis. Residues Asn-50 and Asn-62 are each glycosylated (N-linked (GlcNAc...) asparagine). Cystine bridges form between Cys-54/Cys-112, Cys-68/Cys-123, Cys-86/Cys-138, and Cys-93/Cys-100. Substrate-binding positions include 69–73 and Lys-94; that span reads KPVNT. A glycan (N-linked (GlcNAc...) asparagine) is linked at Asn-104. Position 113 (Arg-113) interacts with substrate. The N-linked (GlcNAc...) asparagine glycan is linked to Asn-116. The active-site Proton donor is the His-147.

The protein belongs to the pancreatic ribonuclease family. Monomer. Interacts with and forms tight 1:1 complexes with RNH1. Dimerization of two such complexes may occur. Interaction with RNH1 inhibits this protein.

The protein localises to the secreted. It carries out the reaction an [RNA] containing cytidine + H2O = an [RNA]-3'-cytidine-3'-phosphate + a 5'-hydroxy-ribonucleotide-3'-[RNA].. The catalysed reaction is an [RNA] containing uridine + H2O = an [RNA]-3'-uridine-3'-phosphate + a 5'-hydroxy-ribonucleotide-3'-[RNA].. Its function is as follows. Endonuclease that catalyzes the cleavage of RNA on the 3' side of pyrimidine nucleotides. Acts on single-stranded and double-stranded RNA. This Gorilla gorilla gorilla (Western lowland gorilla) protein is Ribonuclease pancreatic (RNASE1).